The following is a 148-amino-acid chain: Sec-independent protein translocase protein TatB (148 aa).

The chain crosses the membrane as a helical span at residues 1-21; that stretch reads MFDIGFWELVVIGIVALVVLG.

The protein belongs to the TatB family. In terms of assembly, the Tat system comprises two distinct complexes: a TatABC complex, containing multiple copies of TatA, TatB and TatC subunits, and a separate TatA complex, containing only TatA subunits. Substrates initially bind to the TatABC complex, which probably triggers association of the separate TatA complex to form the active translocon.

It localises to the cell inner membrane. Its function is as follows. Part of the twin-arginine translocation (Tat) system that transports large folded proteins containing a characteristic twin-arginine motif in their signal peptide across membranes. Together with TatC, TatB is part of a receptor directly interacting with Tat signal peptides. TatB may form an oligomeric binding site that transiently accommodates folded Tat precursor proteins before their translocation. The chain is Sec-independent protein translocase protein TatB from Aeromonas salmonicida (strain A449).